Here is a 735-residue protein sequence, read N- to C-terminus: Catalase-peroxidase (735 aa).

Polar residues-rich tracts occupy residues 1 to 10 (MENQNRQNAA) and 17 to 26 (SVTNQSSNRT). The interval 1–30 (MENQNRQNAAQCPFHGSVTNQSSNRTTNKD) is disordered. The tryptophyl-tyrosyl-methioninium (Trp-Tyr) (with M-249) cross-link spans 100-223 (WHSAGTYRIG…LAAVQMGLIY (124 aa)). The active-site Proton acceptor is the His-101. A cross-link (tryptophyl-tyrosyl-methioninium (Tyr-Met) (with W-100)) is located at residues 223–249 (YVNPEGPDGKPDPKAAARDIRETFRRM). Position 264 (His-264) interacts with heme b.

The protein belongs to the peroxidase family. Peroxidase/catalase subfamily. As to quaternary structure, homodimer or homotetramer. Heme b serves as cofactor. In terms of processing, formation of the three residue Trp-Tyr-Met cross-link is important for the catalase, but not the peroxidase activity of the enzyme.

It carries out the reaction H2O2 + AH2 = A + 2 H2O. The enzyme catalyses 2 H2O2 = O2 + 2 H2O. Functionally, bifunctional enzyme with both catalase and broad-spectrum peroxidase activity. Also displays NADH oxidase, INH lyase and isonicotinoyl-NAD synthase activities. The protein is Catalase-peroxidase of Geobacillus stearothermophilus (Bacillus stearothermophilus).